Reading from the N-terminus, the 1052-residue chain is CCAAT/enhancer-binding protein zeta (1052 aa).

Disordered regions lie at residues 1 to 40, 122 to 158, and 621 to 677; these read MSADQEPVAFLAKQPWRPKQVTEDPDEEDEEDGDEGKNGF, VENKKQKATEGKKTSEKKVKNKTVAEQRPESCPVSKA, and SQLD…AEKP. Residues 23-34 are compositionally biased toward acidic residues; the sequence is EDPDEEDEEDGD. Residues 122–150 show a composition bias toward basic and acidic residues; sequence VENKKQKATEGKKTSEKKVKNKTVAEQRP. The span at 627–643 shows a compositional bias: acidic residues; it reads PESDEENFVDVGDDSDD. A phosphoserine mark is found at Ser629 and Ser641. Basic and acidic residues predominate over residues 644–677; that stretch reads EKFTDADKGTATDAVKEVESKETEPESSAEAEKP. Ser837 carries the post-translational modification Phosphoserine. Residues 876–969 are disordered; that stretch reads KGAKADLEDS…QGQKKKKKSF (94 aa). Acidic residues predominate over residues 883 to 932; sequence EDSESSDGELGDLDDDEVSLGSMNDEDFEIDEDGGTFMDVSDDESEDAPE. Phosphoserine is present on residues Ser958, Ser972, and Ser977. A disordered region spans residues 1032-1052; sequence KKKKNFRKKMKAPQKPKRQRK.

The protein belongs to the CBF/MAK21 family. As to expression, ubiquitous.

It is found in the nucleus. Its function is as follows. Stimulates transcription from the HSP70 promoter. In Mus musculus (Mouse), this protein is CCAAT/enhancer-binding protein zeta (Cebpz).